Here is a 464-residue protein sequence, read N- to C-terminus: Arginine biosynthesis bifunctional protein ArgJ, chloroplastic (464 aa).

Residues Thr-208, Lys-234, Thr-245, Glu-332, Asn-459, and Thr-464 each coordinate substrate. Residue Thr-245 is the Nucleophile of the active site.

Belongs to the ArgJ family. As to quaternary structure, heterodimer of an alpha and a beta chain.

The protein resides in the plastid. It localises to the chloroplast. It carries out the reaction N(2)-acetyl-L-ornithine + L-glutamate = N-acetyl-L-glutamate + L-ornithine. The enzyme catalyses L-glutamate + acetyl-CoA = N-acetyl-L-glutamate + CoA + H(+). It participates in amino-acid biosynthesis; L-arginine biosynthesis; L-ornithine and N-acetyl-L-glutamate from L-glutamate and N(2)-acetyl-L-ornithine (cyclic): step 1/1. Its pathway is amino-acid biosynthesis; L-arginine biosynthesis; N(2)-acetyl-L-ornithine from L-glutamate: step 1/4. Catalyzes two activities which are involved in the cyclic version of arginine biosynthesis: the synthesis of acetylglutamate from glutamate and acetyl-CoA, and of ornithine by transacetylation between acetylornithine and glutamate. The polypeptide is Arginine biosynthesis bifunctional protein ArgJ, chloroplastic (Sorghum bicolor (Sorghum)).